The primary structure comprises 315 residues: Large ribosomal subunit protein uL29m (315 aa).

Belongs to the universal ribosomal protein uL29 family. In terms of assembly, component of the mitochondrial large ribosomal subunit. Mature mitochondrial ribosomes consist of a small (37S) and a large (54S) subunit. The 37S subunit contains at least 33 different proteins and 1 molecule of RNA (15S). The 54S subunit contains at least 45 different proteins and 1 molecule of RNA (21S).

The protein resides in the mitochondrion. This chain is Large ribosomal subunit protein uL29m (MRPL4), found in Candida glabrata (strain ATCC 2001 / BCRC 20586 / JCM 3761 / NBRC 0622 / NRRL Y-65 / CBS 138) (Yeast).